We begin with the raw amino-acid sequence, 145 residues long: Mediator of RNA polymerase II transcription subunit 21 (145 aa).

Residues 79–112 (EESTAALQAASLRQLEEENQEAAARLEEVVYRGD) adopt a coiled-coil conformation.

This sequence belongs to the Mediator complex subunit 21 family. As to quaternary structure, component of the Mediator complex.

The protein localises to the nucleus. Component of the Mediator complex, a coactivator involved in the regulated transcription of nearly all RNA polymerase II-dependent genes. Mediator functions as a bridge to convey information from gene-specific regulatory proteins to the basal RNA polymerase II transcription machinery. Mediator is recruited to promoters by direct interactions with regulatory proteins and serves as a scaffold for the assembly of a functional preinitiation complex with RNA polymerase II and the general transcription factors. This is Mediator of RNA polymerase II transcription subunit 21 (med21) from Danio rerio (Zebrafish).